We begin with the raw amino-acid sequence, 191 residues long: MVGKRLWVTGYRAYELNVFGSNDPKLKVLKTSLKNTLMQFLDEGLEWLITGGQLGVEQWAVEVALGLKPLYPDFKIAMMVPFTDFGKQWNEDNQGQLAALRGQVDFSDAVSQAPYQQPAQLQGYTRFMTIHTDAALLVYDPEFPGKAKWDYQAAEAMADRRDYPVQLITMDDLEETAQAMAEAENEHFQND.

This sequence belongs to the UPF0398 family.

The protein is UPF0398 protein LCABL_17010 of Lacticaseibacillus casei (strain BL23) (Lactobacillus casei).